The following is a 141-amino-acid chain: Large ribosomal subunit protein uL11 (141 aa).

The protein belongs to the universal ribosomal protein uL11 family. As to quaternary structure, part of the ribosomal stalk of the 50S ribosomal subunit. Interacts with L10 and the large rRNA to form the base of the stalk. L10 forms an elongated spine to which L12 dimers bind in a sequential fashion forming a multimeric L10(L12)X complex. One or more lysine residues are methylated.

In terms of biological role, forms part of the ribosomal stalk which helps the ribosome interact with GTP-bound translation factors. This is Large ribosomal subunit protein uL11 from Prochlorococcus marinus (strain MIT 9215).